Here is a 605-residue protein sequence, read N- to C-terminus: Elongation factor 4 (605 aa).

Positions 11 to 193 (KNIRNFSIIA…TLVDVIPAPT (183 aa)) constitute a tr-type G domain. GTP-binding positions include 23–28 (DHGKST) and 140–143 (NKID).

The protein belongs to the TRAFAC class translation factor GTPase superfamily. Classic translation factor GTPase family. LepA subfamily.

It is found in the cell inner membrane. The catalysed reaction is GTP + H2O = GDP + phosphate + H(+). Its function is as follows. Required for accurate and efficient protein synthesis under certain stress conditions. May act as a fidelity factor of the translation reaction, by catalyzing a one-codon backward translocation of tRNAs on improperly translocated ribosomes. Back-translocation proceeds from a post-translocation (POST) complex to a pre-translocation (PRE) complex, thus giving elongation factor G a second chance to translocate the tRNAs correctly. Binds to ribosomes in a GTP-dependent manner. The chain is Elongation factor 4 from Acinetobacter baumannii (strain SDF).